Consider the following 493-residue polypeptide: Ketol-acid reductoisomerase (NADP(+)) (493 aa).

A KARI N-terminal Rossmann domain is found at 14 to 208; it reads LDQLGRCRFM…GGDRAGVLES (195 aa). NADP(+) contacts are provided by residues 45–48, Arg68, Arg76, Ser78, and 108–110; these read CGAQ and DKQ. His132 is an active-site residue. An NADP(+)-binding site is contributed by Gly158. KARI C-terminal knotted domains lie at 209–345 and 346–486; these read SFVA…SPKA and DGIK…MTDM. Residues Asp217, Glu221, Glu390, and Glu394 each contribute to the Mg(2+) site. Ser415 lines the substrate pocket.

Belongs to the ketol-acid reductoisomerase family. It depends on Mg(2+) as a cofactor.

It catalyses the reaction (2R)-2,3-dihydroxy-3-methylbutanoate + NADP(+) = (2S)-2-acetolactate + NADPH + H(+). It carries out the reaction (2R,3R)-2,3-dihydroxy-3-methylpentanoate + NADP(+) = (S)-2-ethyl-2-hydroxy-3-oxobutanoate + NADPH + H(+). It functions in the pathway amino-acid biosynthesis; L-isoleucine biosynthesis; L-isoleucine from 2-oxobutanoate: step 2/4. It participates in amino-acid biosynthesis; L-valine biosynthesis; L-valine from pyruvate: step 2/4. Its function is as follows. Involved in the biosynthesis of branched-chain amino acids (BCAA). Catalyzes an alkyl-migration followed by a ketol-acid reduction of (S)-2-acetolactate (S2AL) to yield (R)-2,3-dihydroxy-isovalerate. In the isomerase reaction, S2AL is rearranged via a Mg-dependent methyl migration to produce 3-hydroxy-3-methyl-2-ketobutyrate (HMKB). In the reductase reaction, this 2-ketoacid undergoes a metal-dependent reduction by NADPH to yield (R)-2,3-dihydroxy-isovalerate. The protein is Ketol-acid reductoisomerase (NADP(+)) of Actinobacillus pleuropneumoniae serotype 3 (strain JL03).